The following is a 504-amino-acid chain: Pre-mRNA-processing factor 19 (504 aa).

Ser-2 carries the post-translational modification N-acetylserine. The 72-residue stretch at 2 to 73 folds into the U-box domain; that stretch reads SLICSISNEV…KPPSATSIPA (72 aa). Residues 68–223 are may mediate interaction with PSMC5; that stretch reads ATSIPAILKA…VGLHSASIPG (156 aa). Lys-122, Lys-179, Lys-244, and Lys-261 each carry N6-acetyllysine. One copy of the WD 1 repeat lies at 219-259; it reads ASIPGILALDLCPSDTNKILTGGADKNVVVFDKSSEQILAT. 6 WD repeats span residues 262 to 301, 304 to 345, 348 to 387, 390 to 429, 433 to 472, and 473 to 503; these read GHTKKVTSVVFHPSQDLVFSASPDATIRIWSVPNASCVQV, AHES…TKVT, TSGCSLTCAQFHPDGLIFGTGTMDSQIKIWDLKERTNVAN, GHSGPITSIAFSENGYYLATAADDSSVKLWDLRKLKNFKT, DNNFEVKSLIFDQSGTYLALGGTDVQIYICKQWTEILHFT, and EHSGLTTGVAFGHHAKFIASTGMDRSLKFYS.

This sequence belongs to the WD repeat PRP19 family. Homotetramer. Component of activated, catalytic and post-catalytic spliceosomes. Component of the Prp19 complex/PRP19C/Nineteen complex/NTC and related complexes described as PRP19-CDC5L splicing complex and PSO4 complex. A homotetramer of PRPF19, CDC5L, PLRG1 and BCAS2 constitute the core of those complexes. The interaction with CDC5L, PLRG1 and BCAS2 is direct within this core complex. At least three less stably associated proteins CTNNBL1, CWC15 and HSPA8 are found in the Prp19 complex. The Prp19 complex associates with the spliceosome during its assembly and remodeling recruiting additional proteins. Component of the XAB2 complex, a multimeric protein complex composed of XAB2, PRPF19, AQR, ZNF830, ISY1, and PPIE. Interacts with CWC22 and EIF4A3 in an RNA-independent manner. Interacts with RPA1 and RPA2; the PRP19-CDC5L complex is recruited to the sites of DNA repair where it interacts with the replication protein A complex (RPA). Interacts with SETMAR; required for SETMAR recruitment to site of DNA damage. Interacts with U2AF2; the interaction is direct and recruits the Prp19 complex to RNA polymerase II C-terminal domain (CTD) and the pre-mRNA. Interacts with PRPF3. Interacts with APEX1, DNTT and PSMB4. Interacts with PSMC5. Interacts with KNSTRN. Interacts (via N-terminus) with CDC5L. Interacts with KHDC4. Interacts with USB1. Interacts with DDX41. As to expression, ubiquitous. Weakly expressed in senescent cells of different tissue origins. Highly expressed in tumor cell lines.

It is found in the nucleus. It localises to the nucleoplasm. The protein localises to the cytoplasm. Its subcellular location is the cytoskeleton. The protein resides in the spindle. It is found in the lipid droplet. The catalysed reaction is S-ubiquitinyl-[E2 ubiquitin-conjugating enzyme]-L-cysteine + [acceptor protein]-L-lysine = [E2 ubiquitin-conjugating enzyme]-L-cysteine + N(6)-ubiquitinyl-[acceptor protein]-L-lysine.. Its pathway is protein modification; protein ubiquitination. In terms of biological role, ubiquitin-protein ligase which is a core component of several complexes mainly involved pre-mRNA splicing and DNA repair. Required for pre-mRNA splicing as component of the spliceosome. Core component of the PRP19C/Prp19 complex/NTC/Nineteen complex which is part of the spliceosome and participates in its assembly, its remodeling and is required for its activity. During assembly of the spliceosome, mediates 'Lys-63'-linked polyubiquitination of the U4 spliceosomal protein PRPF3. Ubiquitination of PRPF3 allows its recognition by the U5 component PRPF8 and stabilizes the U4/U5/U6 tri-snRNP spliceosomal complex. Recruited to RNA polymerase II C-terminal domain (CTD) and the pre-mRNA, it may also couple the transcriptional and spliceosomal machineries. The XAB2 complex, which contains PRPF19, is also involved in pre-mRNA splicing, transcription and transcription-coupled repair. Beside its role in pre-mRNA splicing PRPF19, as part of the PRP19-CDC5L complex, plays a role in the DNA damage response/DDR. It is recruited to the sites of DNA damage by the RPA complex where PRPF19 directly ubiquitinates RPA1 and RPA2. 'Lys-63'-linked polyubiquitination of the RPA complex allows the recruitment of the ATR-ATRIP complex and the activation of ATR, a master regulator of the DNA damage response. May also play a role in DNA double-strand break (DSB) repair by recruiting the repair factor SETMAR to altered DNA. As part of the PSO4 complex may also be involved in the DNA interstrand cross-links/ICLs repair process. In addition, may also mediate 'Lys-48'-linked polyubiquitination of substrates and play a role in proteasomal degradation. May play a role in the biogenesis of lipid droplets. May play a role in neural differentiation possibly through its function as part of the spliceosome. The polypeptide is Pre-mRNA-processing factor 19 (Homo sapiens (Human)).